A 420-amino-acid polypeptide reads, in one-letter code: Gamma-glutamyl phosphate reductase (420 aa).

The protein belongs to the gamma-glutamyl phosphate reductase family.

It localises to the cytoplasm. It carries out the reaction L-glutamate 5-semialdehyde + phosphate + NADP(+) = L-glutamyl 5-phosphate + NADPH + H(+). It functions in the pathway amino-acid biosynthesis; L-proline biosynthesis; L-glutamate 5-semialdehyde from L-glutamate: step 2/2. Catalyzes the NADPH-dependent reduction of L-glutamate 5-phosphate into L-glutamate 5-semialdehyde and phosphate. The product spontaneously undergoes cyclization to form 1-pyrroline-5-carboxylate. This chain is Gamma-glutamyl phosphate reductase, found in Pasteurella multocida (strain Pm70).